The chain runs to 316 residues: L-lactate dehydrogenase (316 aa).

Residues Val-15, Asp-37, Lys-42, Tyr-68, and 82–83 each bind NAD(+); that span reads GL. Residues Gln-85, Arg-91, and 123–126 contribute to the substrate site; that span reads NPVD. Residues 121 to 123 and Thr-146 each bind NAD(+); that span reads ASN. 151-154 contributes to the substrate binding site; the sequence is DTSR. Positions 156 and 171 each coordinate beta-D-fructose 1,6-bisphosphate. His-178 (proton acceptor) is an active-site residue. At Tyr-222 the chain carries Phosphotyrosine. Residue Thr-231 participates in substrate binding.

Belongs to the LDH/MDH superfamily. LDH family. In terms of assembly, homotetramer.

It is found in the cytoplasm. It carries out the reaction (S)-lactate + NAD(+) = pyruvate + NADH + H(+). The protein operates within fermentation; pyruvate fermentation to lactate; (S)-lactate from pyruvate: step 1/1. Allosterically activated by fructose 1,6-bisphosphate (FBP). Its function is as follows. Catalyzes the conversion of lactate to pyruvate. The polypeptide is L-lactate dehydrogenase (Borrelia hermsii (strain HS1 / DAH)).